A 304-amino-acid polypeptide reads, in one-letter code: 33 kDa chaperonin (304 aa).

2 disulfides stabilise this stretch: Cys-245-Cys-247 and Cys-278-Cys-281.

Belongs to the HSP33 family. Under oxidizing conditions two disulfide bonds are formed involving the reactive cysteines. Under reducing conditions zinc is bound to the reactive cysteines and the protein is inactive.

The protein localises to the cytoplasm. In terms of biological role, redox regulated molecular chaperone. Protects both thermally unfolding and oxidatively damaged proteins from irreversible aggregation. Plays an important role in the bacterial defense system toward oxidative stress. The sequence is that of 33 kDa chaperonin from Microcystis aeruginosa (strain NIES-843 / IAM M-2473).